The sequence spans 485 residues: Glutamyl-tRNA(Gln) amidotransferase subunit A (485 aa).

Residues K78 and S153 each act as charge relay system in the active site. S177 acts as the Acyl-ester intermediate in catalysis.

It belongs to the amidase family. GatA subfamily. Heterotrimer of A, B and C subunits.

The catalysed reaction is L-glutamyl-tRNA(Gln) + L-glutamine + ATP + H2O = L-glutaminyl-tRNA(Gln) + L-glutamate + ADP + phosphate + H(+). In terms of biological role, allows the formation of correctly charged Gln-tRNA(Gln) through the transamidation of misacylated Glu-tRNA(Gln) in organisms which lack glutaminyl-tRNA synthetase. The reaction takes place in the presence of glutamine and ATP through an activated gamma-phospho-Glu-tRNA(Gln). The chain is Glutamyl-tRNA(Gln) amidotransferase subunit A from Pelobacter propionicus (strain DSM 2379 / NBRC 103807 / OttBd1).